The chain runs to 700 residues: MARITPIERYRNIGISAHIDAGKTTTSERILFYTGVSHKIGEVHDGAATMDWMEQEQERGITITSAATTAFWSGMSQQFQQHRINVIDTPGHVDFTIEVERSMRVLDGAVMVYCAVGGVQPQSETVWRQANKYQVPRIAFVNKMDRTGANFLRVVEQLKTRLGANAVPLQLPVGAEDNFKGVVDLIKMKAINWNEEDQGMTFTYDDIPADMLEACEEWRNNLVEAAAESSEELMEKYLGGEELTEEEIKGALRARVLANEIILVTCGSAFKNKGVQAMLDAVVEYLPSPVDIPAIKGINEDETEGERHASDDEPFAALAFKIATDPFVGNLTFFRVYSGVVNSGDTVVNSVRQKRERFGRIVQMHANKREEIKEVRAGDIAAAIGLKDVTTGDTLCDPNAPIILERMEFPDPVISVAVEPKTKADQEKMGLALGRLAQEDPSFRVHTDEESGETIISGMGELHLDIIVDRMKREFKVEANIGKPQVSYRETIRTRVNDVEGKHAKQSGGRGQYGHVVIDLYPLDPEGPGYEFVNEIKGGVIPGEYIPAVDKGIQEQLKSGPLAGYPVVDIGVRLHFGSYHDVDSSELAFKLAASIAFKAAFNKANPVLLEPIMKVEVETPPEYVGDVIGDLSRRRAMVNGQEANDFVVKINAEVPLSEMFGYATDLRSQTQGRASYSMEPLKYAEAPTSVAAAVIEARKK.

Positions E8–V290 constitute a tr-type G domain. Residues A17–T24, D88–H92, and N142–D145 each bind GTP.

The protein belongs to the TRAFAC class translation factor GTPase superfamily. Classic translation factor GTPase family. EF-G/EF-2 subfamily.

It is found in the cytoplasm. Functionally, catalyzes the GTP-dependent ribosomal translocation step during translation elongation. During this step, the ribosome changes from the pre-translocational (PRE) to the post-translocational (POST) state as the newly formed A-site-bound peptidyl-tRNA and P-site-bound deacylated tRNA move to the P and E sites, respectively. Catalyzes the coordinated movement of the two tRNA molecules, the mRNA and conformational changes in the ribosome. This chain is Elongation factor G, found in Mannheimia succiniciproducens (strain KCTC 0769BP / MBEL55E).